The sequence spans 407 residues: tRNA (guanine(9)-N1)-methyltransferase (407 aa).

Over residues 1–19 the composition is skewed to basic and acidic residues; that stretch reads MDLDPAHKPSQAEETKEQG. 2 disordered regions span residues 1–105 and 220–256; these read MDLD…VRKR and ENMIEPLQRSLTEKSPWARDEKDPLPLPDPEPEPRPE. The span at 20 to 32 shows a compositional bias: low complexity; sequence NEQGQVEQNQAQQ. The span at 91–103 shows a compositional bias: basic residues; it reads LKRKDSRIARKVR. Residues 120 to 356 enclose the SAM-dependent MTase TRM10-type domain; that stretch reads ANKQKPPSVN…SVIPKRKGGK (237 aa). S-adenosyl-L-methionine contacts are provided by residues 263–264, Gly-283, 287–291, Cys-295, Leu-309, and 321–323; these read LS, DKNRE, and TVL. Asp-287 serves as the catalytic Proton acceptor. Residues 353-407 form a disordered region; that stretch reads KGGKLKEQQGASGETQETEEAEAEDPEEENEETKDPDAEASASKQNTPKVEVTSK. The span at 368-386 shows a compositional bias: acidic residues; it reads QETEEAEAEDPEEENEETK. Over residues 394–407 the composition is skewed to polar residues; that stretch reads ASKQNTPKVEVTSK.

It belongs to the class IV-like SAM-binding methyltransferase superfamily. TRM10 family. As to quaternary structure, monomer.

It localises to the cytoplasm. Its subcellular location is the nucleus. It carries out the reaction guanosine(9) in tRNA + S-adenosyl-L-methionine = N(1)-methylguanosine(9) in tRNA + S-adenosyl-L-homocysteine + H(+). Functionally, S-adenosyl-L-methionine-dependent guanine N(1)-methyltransferase that catalyzes the formation of N(1)-methylguanine at position 9 (m1G9) in cytoplasmic tRNA. The polypeptide is tRNA (guanine(9)-N1)-methyltransferase (Gibberella zeae (strain ATCC MYA-4620 / CBS 123657 / FGSC 9075 / NRRL 31084 / PH-1) (Wheat head blight fungus)).